The primary structure comprises 316 residues: Mannose-6-phosphate isomerase (316 aa).

The Zn(2+) site is built by Q95, H97, E114, and H171. The active site involves R191.

This sequence belongs to the mannose-6-phosphate isomerase type 1 family. It depends on Zn(2+) as a cofactor.

It catalyses the reaction D-mannose 6-phosphate = D-fructose 6-phosphate. The polypeptide is Mannose-6-phosphate isomerase (pmi) (Streptococcus mutans serotype c (strain ATCC 700610 / UA159)).